Consider the following 60-residue polypeptide: Large ribosomal subunit protein uL30 (60 aa).

This sequence belongs to the universal ribosomal protein uL30 family. In terms of assembly, part of the 50S ribosomal subunit.

The chain is Large ribosomal subunit protein uL30 from Azoarcus sp. (strain BH72).